Here is a 181-residue protein sequence, read N- to C-terminus: Endoribonuclease YbeY (181 aa).

H140, H144, and H150 together coordinate Zn(2+).

The protein belongs to the endoribonuclease YbeY family. It depends on Zn(2+) as a cofactor.

Its subcellular location is the cytoplasm. Single strand-specific metallo-endoribonuclease involved in late-stage 70S ribosome quality control and in maturation of the 3' terminus of the 16S rRNA. This is Endoribonuclease YbeY from Dinoroseobacter shibae (strain DSM 16493 / NCIMB 14021 / DFL 12).